The following is a 305-amino-acid chain: Short-chain dehydrogenase/reductase VdtF (305 aa).

Positions 28 and 98 each coordinate NADP(+). Residue Ser192 is the Proton donor of the active site. Residues Tyr206, Lys210, and Thr241 each contribute to the NADP(+) site. Catalysis depends on Tyr206, which acts as the Proton acceptor. Residue Lys210 is the Lowers pKa of active site Tyr of the active site.

It belongs to the short-chain dehydrogenases/reductases (SDR) family.

The catalysed reaction is methyl 2-[(3S)-9,10-dihydroxy-7-methoxy-1-oxo-1H,3H,4H-naphtho[2,3-c]pyran-3-yl]acetate + AH2 = semiviriditoxin + A. The enzyme catalyses 9,10-dihydroxy-7-methoxy-3-(2-oxopropyl)-1H-benzo[g]isochromen-1-one + AH2 = (3S)-9,10-dihydroxy-7-methoxy-3-(2-oxopropyl)-1H,3H,4H-naphtho[2,3-c]pyran-1-one + A. It participates in secondary metabolite biosynthesis. Its function is as follows. Short-chain dehydrogenase/reductase; part of the gene cluster that mediates the biosynthesis of viriditoxin, one of the 'classical' secondary metabolites produced by fungi and that has antibacterial activity. The first step is performed by the polyketide synthase VdtA which condenses one acetyl-CoA and 6 malonyl-CoA units to form the heptaketide monomer backbone of viriditoxin. The product of VdtA is then O-methylated on C7 by the O-methyltransferase VdtC. The O-methyl group is important for the stereoselective coupling of the monomers at the final step of viriditoxin biosynthesis. The short-chain dehydrogenase/reductase VdtF then acts as a stereospecific reductase converting the pyrone to dihydropyrone via the reduction of the C3-C4 double bond. The FAD-binding monooxygenase VdtE then converts the ketone group into a methyl-ester group to yield semi-viriditoxin. Finally, the laccase VdtB is involved in dimerization of 2 semi-viriditoxin molecules to yield the final viriditoxin. VdtB is responsible for the regioselective 6,6'-coupling of semi-viriditoxin, which yields (M)-viriditoxin and (P)-viriditoxin at a ratio of 1:2. The non-catalytic carboxylesterase-like protein VdtD affects the stereochemistical outcome of the coupling. The highly reducing polyketide synthase VdtX is not involved in viriditoxin synthesis, but might possibly play a role in the production of additional metabolites not identified yet. In Byssochlamys spectabilis (Paecilomyces variotii), this protein is Short-chain dehydrogenase/reductase VdtF.